Reading from the N-terminus, the 429-residue chain is Ribosomal RNA small subunit methyltransferase B (429 aa).

S-adenosyl-L-methionine-binding positions include 254–260 (CAAPGGK), Asp277, Asp303, and Asp322. Cys375 functions as the Nucleophile in the catalytic mechanism.

Belongs to the class I-like SAM-binding methyltransferase superfamily. RsmB/NOP family.

The protein resides in the cytoplasm. It catalyses the reaction cytidine(967) in 16S rRNA + S-adenosyl-L-methionine = 5-methylcytidine(967) in 16S rRNA + S-adenosyl-L-homocysteine + H(+). Specifically methylates the cytosine at position 967 (m5C967) of 16S rRNA. This chain is Ribosomal RNA small subunit methyltransferase B, found in Escherichia coli O127:H6 (strain E2348/69 / EPEC).